We begin with the raw amino-acid sequence, 101 residues long: Small ribosomal subunit protein bS18c (101 aa).

Belongs to the bacterial ribosomal protein bS18 family. As to quaternary structure, component of the chloroplast small ribosomal subunit (SSU). Mature 70S chloroplast ribosomes of higher plants consist of a small (30S) and a large (50S) subunit. The 30S small subunit contains 1 molecule of ribosomal RNA (16S rRNA) and 24 different proteins. The 50S large subunit contains 3 rRNA molecules (23S, 5S and 4.5S rRNA) and 33 different proteins.

Its subcellular location is the plastid. It localises to the chloroplast. Functionally, component of the chloroplast ribosome (chloro-ribosome), a dedicated translation machinery responsible for the synthesis of chloroplast genome-encoded proteins, including proteins of the transcription and translation machinery and components of the photosynthetic apparatus. This chain is Small ribosomal subunit protein bS18c (RPS18), found in Spinacia oleracea (Spinach).